A 325-amino-acid chain; its full sequence is MYNVRTDLAVESREIYKHRYNREIDGVVFEEKTVEEDIKVTNVDILNEEGAKAMGKPIGRYVTIDIPEYTHYDGGIMDEVSHVVAASLEELINLPEERTALVVGLGNWNVTPDAIGPKVVGKLMVTRHLKKVMPDIIDDSVRPVCAIAPGVLGITGIETGEIIKSLVEKINPDLVVCIDALASRKLERVARTIQISNTGISPGAGVGNHRMQINEESLGIPVIALGVPTVVDAATIANDAMDLVLDEMINQADAGKEFYNILNNIDKNEKGMMIKSLLDPYVGDLMVTPKEIDDIIESVSKIIANGINIALQPNMVLEDINKFLN.

The propeptide occupies 1 to 7; sequence MYNVRTD.

It belongs to the peptidase A25 family. As to quaternary structure, homotetramer. Post-translationally, autoproteolytically processed. The inactive tetrameric zymogen termed p46 autoprocesses to a smaller form termed p41, which is active only during spore germination.

The catalysed reaction is Endopeptidase action with P4 Glu or Asp, P1 preferably Glu &gt; Asp, P1' hydrophobic and P2' Ala.. Initiates the rapid degradation of small, acid-soluble proteins during spore germination. The chain is Germination protease from Clostridium perfringens (strain ATCC 13124 / DSM 756 / JCM 1290 / NCIMB 6125 / NCTC 8237 / Type A).